The following is a 336-amino-acid chain: Pyridoxal 5'-phosphate synthase subunit PdxS (336 aa).

Residue Asp-30 coordinates D-ribose 5-phosphate. Lys-87 serves as the catalytic Schiff-base intermediate with D-ribose 5-phosphate. Position 159 (Gly-159) interacts with D-ribose 5-phosphate. Arg-171 serves as a coordination point for D-glyceraldehyde 3-phosphate. Residues Gly-257 and 278 to 279 contribute to the D-ribose 5-phosphate site; that span reads GS.

This sequence belongs to the PdxS/SNZ family. In the presence of PdxT, forms a dodecamer of heterodimers.

It carries out the reaction aldehydo-D-ribose 5-phosphate + D-glyceraldehyde 3-phosphate + L-glutamine = pyridoxal 5'-phosphate + L-glutamate + phosphate + 3 H2O + H(+). The protein operates within cofactor biosynthesis; pyridoxal 5'-phosphate biosynthesis. Functionally, catalyzes the formation of pyridoxal 5'-phosphate from ribose 5-phosphate (RBP), glyceraldehyde 3-phosphate (G3P) and ammonia. The ammonia is provided by the PdxT subunit. Can also use ribulose 5-phosphate and dihydroxyacetone phosphate as substrates, resulting from enzyme-catalyzed isomerization of RBP and G3P, respectively. In Thermoplasma acidophilum (strain ATCC 25905 / DSM 1728 / JCM 9062 / NBRC 15155 / AMRC-C165), this protein is Pyridoxal 5'-phosphate synthase subunit PdxS.